Consider the following 85-residue polypeptide: Phosphocarrier protein HPr (85 aa).

Positions 1 to 85 constitute an HPr domain; sequence MFQRDIKITT…DLAKFLTTLK (85 aa). The active-site Pros-phosphohistidine intermediate is the His-15.

The protein belongs to the HPr family.

It localises to the cytoplasm. Functionally, general (non sugar-specific) component of the phosphoenolpyruvate-dependent sugar phosphotransferase system (sugar PTS). This major carbohydrate active-transport system catalyzes the phosphorylation of incoming sugar substrates concomitantly with their translocation across the cell membrane. The phosphoryl group from phosphoenolpyruvate (PEP) is transferred to the phosphoryl carrier protein HPr by enzyme I. Phospho-HPr then transfers it to the PTS EIIA domain. The sequence is that of Phosphocarrier protein HPr (ptsH) from Buchnera aphidicola subsp. Baizongia pistaciae (strain Bp).